A 537-amino-acid chain; its full sequence is Phosphoenolpyruvate carboxykinase (ATP) (537 aa).

Substrate contacts are provided by R64, Y204, and K210. Residues K210, H229, and 245-253 (GLSGTGKTT) each bind ATP. K210 and H229 together coordinate Mn(2+). Mn(2+) is bound at residue D266. ATP contacts are provided by residues E294, R330, 446-447 (RI), and T452. R330 lines the substrate pocket.

It belongs to the phosphoenolpyruvate carboxykinase (ATP) family. As to quaternary structure, monomer. Mn(2+) is required as a cofactor.

The protein resides in the cytoplasm. The catalysed reaction is oxaloacetate + ATP = phosphoenolpyruvate + ADP + CO2. It functions in the pathway carbohydrate biosynthesis; gluconeogenesis. In terms of biological role, involved in the gluconeogenesis. Catalyzes the conversion of oxaloacetate (OAA) to phosphoenolpyruvate (PEP) through direct phosphoryl transfer between the nucleoside triphosphate and OAA. This chain is Phosphoenolpyruvate carboxykinase (ATP), found in Aliivibrio fischeri (strain ATCC 700601 / ES114) (Vibrio fischeri).